Reading from the N-terminus, the 295-residue chain is Elongation factor Ts (295 aa).

Residues 79-82 (TDFV) form an involved in Mg(2+) ion dislocation from EF-Tu region.

It belongs to the EF-Ts family.

Its subcellular location is the cytoplasm. Functionally, associates with the EF-Tu.GDP complex and induces the exchange of GDP to GTP. It remains bound to the aminoacyl-tRNA.EF-Tu.GTP complex up to the GTP hydrolysis stage on the ribosome. The polypeptide is Elongation factor Ts (Bacillus cereus (strain ATCC 10987 / NRS 248)).